The primary structure comprises 496 residues: Probable G-protein coupled receptor K01A12.3 (496 aa).

The Extracellular segment spans residues 1-19; that stretch reads MESVTRHRADMISFFTFDS. Residues 20–40 form a helical membrane-spanning segment; that stretch reads YISIVGVAYTAVGLLGVFCNV. At 41–58 the chain is on the cytoplasmic side; it reads TTVIMILTNRVFRLSAYT. The chain crosses the membrane as a helical span at residues 59-79; it reads IMANVALADSIVMLIAGVACG. At 80–128 the chain is on the extracellular side; the sequence is MDVMWPNPNDLTSFIPSLEEPYQKIAPVSLRNDSKTDSSAAGFETGNIH. Residue Asn111 is glycosylated (N-linked (GlcNAc...) asparagine). Residues 129-149 traverse the membrane as a helical segment; sequence AVLSFSFVAAWTAGVISYAML. Residues 150 to 169 lie on the Cytoplasmic side of the membrane; the sequence is GTNRCIAICYYGTKARALNQ. Residues 170–190 form a helical membrane-spanning segment; the sequence is VSVAVACSASTWIVGIAAALV. At 191–216 the chain is on the extracellular side; the sequence is GTLSQPMIGIQRTMWSISFLEPRPHT. A helical transmembrane segment spans residues 217 to 237; the sequence is TLFFTLLCAANLLGLGAQWVC. The Cytoplasmic segment spans residues 238–285; it reads STLVLLKIRQVKKKISKNKLNQNSANRFRKQVILALNEIIVTGNFKAR. The chain crosses the membrane as a helical span at residues 286 to 306; that stretch reads LTFQFFYPSILCTISTFLFFI. Residues 307-318 lie on the Extracellular side of the membrane; the sequence is KPYAFEYLSGWQ. A helical membrane pass occupies residues 319 to 339; sequence LVILHLLWLCNHTCNPFIYAY. Residues 340 to 496 lie on the Cytoplasmic side of the membrane; the sequence is FNDRMRLTYK…WVKFAKKASI (157 aa). Residues 451–470 form a disordered region; that stretch reads TKELESAHNQGGSSRFDSER.

It belongs to the G-protein coupled receptor 1 family.

Its subcellular location is the cell membrane. The chain is Probable G-protein coupled receptor K01A12.3 from Caenorhabditis elegans.